The sequence spans 196 residues: Peptidyl-tRNA hydrolase (196 aa).

Y19 lines the tRNA pocket. Catalysis depends on H24, which acts as the Proton acceptor. TRNA-binding residues include Y68, N70, and N116.

Belongs to the PTH family. Monomer.

It is found in the cytoplasm. It carries out the reaction an N-acyl-L-alpha-aminoacyl-tRNA + H2O = an N-acyl-L-amino acid + a tRNA + H(+). Hydrolyzes ribosome-free peptidyl-tRNAs (with 1 or more amino acids incorporated), which drop off the ribosome during protein synthesis, or as a result of ribosome stalling. In terms of biological role, catalyzes the release of premature peptidyl moieties from peptidyl-tRNA molecules trapped in stalled 50S ribosomal subunits, and thus maintains levels of free tRNAs and 50S ribosomes. The chain is Peptidyl-tRNA hydrolase from Aromatoleum aromaticum (strain DSM 19018 / LMG 30748 / EbN1) (Azoarcus sp. (strain EbN1)).